Here is a 242-residue protein sequence, read N- to C-terminus: Uridylate kinase (242 aa).

Residue 16–19 (KVSG) coordinates ATP. A UMP-binding site is contributed by Gly-58. ATP contacts are provided by Gly-59 and Arg-63. UMP is bound by residues Asp-78 and 139-146 (TGNPFCTT). Thr-166, Gln-167, Tyr-172, and Asp-175 together coordinate ATP.

This sequence belongs to the UMP kinase family. In terms of assembly, homohexamer.

It localises to the cytoplasm. It carries out the reaction UMP + ATP = UDP + ADP. It participates in pyrimidine metabolism; CTP biosynthesis via de novo pathway; UDP from UMP (UMPK route): step 1/1. With respect to regulation, inhibited by UTP. Its function is as follows. Catalyzes the reversible phosphorylation of UMP to UDP. This is Uridylate kinase from Rickettsia massiliae (strain Mtu5).